Reading from the N-terminus, the 158-residue chain is Transcription elongation factor GreA (158 aa).

The stretch at 8–74 forms a coiled coil; that stretch reads TKGGYNKLKD…TLERVLSTAT (67 aa).

It belongs to the GreA/GreB family.

Functionally, necessary for efficient RNA polymerase transcription elongation past template-encoded arresting sites. The arresting sites in DNA have the property of trapping a certain fraction of elongating RNA polymerases that pass through, resulting in locked ternary complexes. Cleavage of the nascent transcript by cleavage factors such as GreA or GreB allows the resumption of elongation from the new 3'terminus. GreA releases sequences of 2 to 3 nucleotides. This chain is Transcription elongation factor GreA, found in Chloroherpeton thalassium (strain ATCC 35110 / GB-78).